A 131-amino-acid chain; its full sequence is M-zodatoxin-Lt8o (131 aa).

An N-terminal signal peptide occupies residues 1–20 (MKYFVVALALVAAFACIAES). A propeptide spanning residues 21-60 (KPAESEHELAEVEEENELADLEDAVWLEHLADLSDLEEAR) is cleaved from the precursor.

This sequence belongs to the cationic peptide 06 (cytoinsectotoxin) family. Expressed by the venom gland.

The protein resides in the secreted. Functionally, insecticidal, cytolytic and antimicrobial peptide. Forms voltage-dependent, ion-permeable channels in membranes. At high concentration causes cell membrane lysis. This is M-zodatoxin-Lt8o (cit 1-14) from Lachesana tarabaevi (Spider).